A 286-amino-acid chain; its full sequence is Energy-coupling factor transporter ATP-binding protein EcfA2 (286 aa).

The region spanning 3–246 is the ABC transporter domain; that stretch reads IRFDNVSYTY…KEKLADWHIA (244 aa). 40 to 47 is an ATP binding site; the sequence is GQTGSGKS.

It belongs to the ABC transporter superfamily. Energy-coupling factor EcfA family. Forms a stable energy-coupling factor (ECF) transporter complex composed of 2 membrane-embedded substrate-binding proteins (S component), 2 ATP-binding proteins (A component) and 2 transmembrane proteins (T component).

The protein localises to the cell membrane. Its function is as follows. ATP-binding (A) component of a common energy-coupling factor (ECF) ABC-transporter complex. Unlike classic ABC transporters this ECF transporter provides the energy necessary to transport a number of different substrates. The sequence is that of Energy-coupling factor transporter ATP-binding protein EcfA2 from Staphylococcus aureus (strain bovine RF122 / ET3-1).